The primary structure comprises 82 residues: Translational regulator CsrA (82 aa).

This sequence belongs to the CsrA/RsmA family. In terms of assembly, homodimer; the beta-strands of each monomer intercalate to form a hydrophobic core, while the alpha-helices form wings that extend away from the core.

The protein resides in the cytoplasm. In terms of biological role, a translational regulator that binds mRNA to regulate translation initiation and/or mRNA stability. Usually binds in the 5'-UTR at or near the Shine-Dalgarno sequence preventing ribosome-binding, thus repressing translation. Its main target seems to be the major flagellin gene, while its function is anatagonized by FliW. The sequence is that of Translational regulator CsrA from Geobacillus sp. (strain WCH70).